We begin with the raw amino-acid sequence, 381 residues long: GDP-mannose transporter (381 aa).

Over methionine 1–proline 44 the chain is Cytoplasmic. The tract at residues glutamine 19–serine 41 is disordered. Pro residues predominate over residues alanine 26 to proline 35. The helical transmembrane segment at isoleucine 45 to valine 65 threads the bilayer. Residues leucine 66–aspartate 70 lie on the Lumenal side of the membrane. The chain crosses the membrane as a helical span at residues phenylalanine 71–threonine 91. The Cytoplasmic segment spans residues cysteine 92–arginine 109. Residues lysine 110–serine 126 traverse the membrane as a helical segment. Residues lysine 127 to serine 133 are Lumenal-facing. The chain crosses the membrane as a helical span at residues isoleucine 134–tyrosine 150. The Cytoplasmic portion of the chain corresponds to glycine 151–serine 159. Residues valine 160–alanine 181 traverse the membrane as a helical segment. Topologically, residues aspartate 182–threonine 199 are lumenal. The helical transmembrane segment at leucine 200–glycine 220 threads the bilayer. The Cytoplasmic segment spans residues methionine 221–aspartate 234. The helical transmembrane segment at threonine 235 to glutamate 255 threads the bilayer. Residues aspartate 256–serine 273 lie on the Lumenal side of the membrane. Residues isoleucine 274 to tryptophan 294 form a helical membrane-spanning segment. Residues cysteine 295 to threonine 302 lie on the Cytoplasmic side of the membrane. Residues threonine 303 to phenylalanine 323 traverse the membrane as a helical segment. The Lumenal segment spans residues aspartate 324–proline 326. A helical transmembrane segment spans residues valine 327 to valine 347. Residues alanine 348 to serine 381 lie on the Cytoplasmic side of the membrane. The segment at threonine 358–serine 381 is disordered. Polar residues predominate over residues proline 366 to serine 381.

This sequence belongs to the TPT transporter family. SLC35D subfamily. In terms of assembly, homooligomer.

It is found in the golgi apparatus membrane. Its subcellular location is the cytoplasmic vesicle membrane. The protein resides in the endoplasmic reticulum membrane. In terms of biological role, involved in the import of GDP-mannose from the cytoplasm into the Golgi lumen. The chain is GDP-mannose transporter (gmt1) from Aspergillus niger (strain ATCC MYA-4892 / CBS 513.88 / FGSC A1513).